A 40-amino-acid chain; its full sequence is Large ribosomal subunit protein bL36B (40 aa).

Belongs to the bacterial ribosomal protein bL36 family.

The chain is Large ribosomal subunit protein bL36B from Arthrobacter sp. (strain FB24).